Here is a 354-residue protein sequence, read N- to C-terminus: AT-rich binding protein (354 aa).

The segment at 31–54 adopts a C2H2-type 1 zinc-finger fold; it reads IVCHTCQEELQTQDKFWKHIQDEH. Disordered regions lie at residues 84–124 and 256–276; these read LPLY…HDDQ and EVQQHKESTNNSTTASASSAM. Composition is skewed to basic and acidic residues over residues 89–100 and 109–124; these read KVSENDQQRDDV and QKEPKDYTEMRAHDDQ. Positions 264 to 276 are enriched in low complexity; that stretch reads TNNSTTASASSAM. C2H2-type zinc fingers lie at residues 285-309 and 315-338; these read YICDFENCGLKFKYHSRLELHRSVH and FACEICGASFKQSCNLSTHRKKKH.

As to quaternary structure, homooctamer. Fat body.

It is found in the nucleus. Functionally, may be a transcription factor for genes having (A+T) stretches in their promoter and/or enhancer regions. Binds to AT rich DNA. This Sarcophaga peregrina (Flesh fly) protein is AT-rich binding protein.